The primary structure comprises 475 residues: Ankyrin repeat, SAM and basic leucine zipper domain-containing protein 1 (475 aa).

A disordered region spans residues 1–25 (MAAGPLRGLAVAGGGESSDSEDDGW). Phosphoserine is present on residues S17, S18, and S20. ANK repeat units lie at residues 45–74 (ERQE…SVDT), 78–107 (YGWT…NASF), 110–144 (DKQT…DPNV), 148–177 (RLMT…EVNT), 181–210 (NGYT…NKMI), and 214–243 (DGKT…PLEG). The SAM domain occupies 272-334 (SYTAFGDLEI…KIMAALKELE (63 aa)).

In terms of assembly, interacts with DDX4, PIWIL1, RANBP9 and TDRD1.

Its subcellular location is the cytoplasm. Plays a central role during spermatogenesis by repressing transposable elements and preventing their mobilization, which is essential for the germline integrity. Acts via the piRNA metabolic process, which mediates the repression of transposable elements during meiosis by forming complexes composed of piRNAs and Piwi proteins and governs the methylation and subsequent repression of transposons. Its association with pi-bodies suggests a participation in the primary piRNAs metabolic process. Required prior to the pachytene stage to facilitate the production of multiple types of piRNAs, including those associated with repeats involved in the regulation of retrotransposons. May act by mediating protein-protein interactions during germ cell maturation. The sequence is that of Ankyrin repeat, SAM and basic leucine zipper domain-containing protein 1 (ASZ1) from Bos taurus (Bovine).